The chain runs to 127 residues: Large ribosomal subunit protein uL18 (127 aa).

Belongs to the universal ribosomal protein uL18 family. In terms of assembly, part of the 50S ribosomal subunit; part of the 5S rRNA/L5/L18/L25 subcomplex. Contacts the 5S and 23S rRNAs.

Functionally, this is one of the proteins that bind and probably mediate the attachment of the 5S RNA into the large ribosomal subunit, where it forms part of the central protuberance. This chain is Large ribosomal subunit protein uL18, found in Streptomyces avermitilis (strain ATCC 31267 / DSM 46492 / JCM 5070 / NBRC 14893 / NCIMB 12804 / NRRL 8165 / MA-4680).